The following is a 625-amino-acid chain: Tyrosine-protein kinase ITK/TSK (625 aa).

The 114-residue stretch at 4 to 117 folds into the PH domain; that stretch reads FILLEEQLIK…WVLTLKEETR (114 aa). A Btk-type zinc finger spans residues 119–155; that stretch reads NNSLVSKYHPNFWMDGRWRCCSQLEKPAVGCAPYDPS. Residues His127, Cys138, Cys139, and Cys149 each contribute to the Zn(2+) site. Residues 153 to 174 form a disordered region; it reads DPSKNASKKPLPPTPEDNRRSF. The 61-residue stretch at 177-237 folds into the SH3 domain; the sequence is PEETLVIALY…PSSYLVEKSP (61 aa). Tyr186 carries the phosphotyrosine; by autocatalysis modification. In terms of domain architecture, SH2 spans 245–343; that stretch reads WYNKSISRDK…GLVTRLRYPV (99 aa). In terms of domain architecture, Protein kinase spans 368-620; it reads LTFVQEIGSG…SQLLSQLAEI (253 aa). ATP contacts are provided by residues 374 to 382 and Lys396; that span reads IGSGQFGLV. The Proton acceptor role is filled by Asp487. Tyr517 carries the post-translational modification Phosphotyrosine; by LCK. Ser570 carries the phosphoserine modification.

This sequence belongs to the protein kinase superfamily. Tyr protein kinase family. TEC subfamily. As to quaternary structure, homooligomerizes; this association negatively regulates kinase activity. Interacts with PPIA/CYPA; this interaction regulates TCR signal strength via a proline-directed conformational switch in ITK. Interacts with THEMIS. Interacts with FASLG. Interacts with VAV1; this interaction is important for VAV1 localization and TCR-induced actin polarization. Interacts with TBX21. Zn(2+) is required as a cofactor. In terms of processing, phosphorylated at Tyr-517 in the activation loop of the kinase domain by LCK. Subsequent autophosphorylation at Tyr-186 leads to the kinase activation. The autophosphorylated Tyr-186 lies within the substrate binding sequence of the SH3 domain. Ubiquitinated. Is detected in the thymus, lymph node and very faintly in the spleen, but is not detected in the liver, lung, kidney, heart, brain, intestine or testis. Expressed in T-lymphocytes and mast cells. It may also be expressed in natural killer cells.

It is found in the cytoplasm. It localises to the nucleus. The catalysed reaction is L-tyrosyl-[protein] + ATP = O-phospho-L-tyrosyl-[protein] + ADP + H(+). Its function is as follows. Tyrosine kinase that plays an essential role in regulation of the adaptive immune response. Regulates the development, function and differentiation of conventional T-cells and nonconventional NKT-cells. When antigen presenting cells (APC) activate T-cell receptor (TCR), a series of phosphorylation lead to the recruitment of ITK to the cell membrane, in the vicinity of the stimulated TCR receptor, where it is phosphorylated by LCK. Phosphorylation leads to ITK autophosphorylation and full activation. Once activated, phosphorylates PLCG1, leading to the activation of this lipase and subsequent cleavage of its substrates. In turn, the endoplasmic reticulum releases calcium in the cytoplasm and the nuclear activator of activated T-cells (NFAT) translocates into the nucleus to perform its transcriptional duty. Phosphorylates 2 essential adapter proteins: the linker for activation of T-cells/LAT protein and LCP2. Then, a large number of signaling molecules such as VAV1 are recruited and ultimately lead to lymphokine production, T-cell proliferation and differentiation. Required for TCR-mediated calcium response in gamma-delta T-cells, may also be involved in the modulation of the transcriptomic signature in the Vgamma2-positive subset of immature gamma-delta T-cells. Phosphorylates TBX21 at 'Tyr-525' and mediates its interaction with GATA3. This chain is Tyrosine-protein kinase ITK/TSK (Itk), found in Mus musculus (Mouse).